The following is a 400-amino-acid chain: Nicotinate phosphoribosyltransferase (400 aa).

Position 220 is a phosphohistidine; by autocatalysis (histidine 220).

Belongs to the NAPRTase family. Post-translationally, transiently phosphorylated on a His residue during the reaction cycle. Phosphorylation strongly increases the affinity for substrates and increases the rate of nicotinate D-ribonucleotide production. Dephosphorylation regenerates the low-affinity form of the enzyme, leading to product release.

It carries out the reaction nicotinate + 5-phospho-alpha-D-ribose 1-diphosphate + ATP + H2O = nicotinate beta-D-ribonucleotide + ADP + phosphate + diphosphate. It functions in the pathway cofactor biosynthesis; NAD(+) biosynthesis; nicotinate D-ribonucleotide from nicotinate: step 1/1. Its function is as follows. Catalyzes the synthesis of beta-nicotinate D-ribonucleotide from nicotinate and 5-phospho-D-ribose 1-phosphate at the expense of ATP. The sequence is that of Nicotinate phosphoribosyltransferase from Salmonella typhimurium (strain LT2 / SGSC1412 / ATCC 700720).